Reading from the N-terminus, the 211-residue chain is Claudin-1 (211 aa).

At M1–Q7 the chain is on the cytoplasmic side. The helical transmembrane segment at L8 to P28 threads the bilayer. The Extracellular portion of the chain corresponds to Q29–R81. C54 and C64 are oxidised to a cystine. The chain crosses the membrane as a helical span at residues A82–M102. Topologically, residues K103–K115 are cytoplasmic. The chain crosses the membrane as a helical span at residues M116–A136. Over T137–Q163 the chain is Extracellular. A helical membrane pass occupies residues A164–C184. Topologically, residues S185–V211 are cytoplasmic. The tract at residues T190–V211 is disordered. The interactions with TJP1, TJP2, TJP3 and PATJ stretch occupies residues Y210–V211.

The protein belongs to the claudin family. Can form homo- and heteropolymers with other CLDN. Homopolymers interact with CLDN3, but not CLDN2, homopolymers. Directly interacts with TJP1/ZO-1, TJP2/ZO-2 and TJP3/ZO-3. Interacts with MPDZ and PATJ. Interacts with OCLN, CD81, CLDN4, CLDN6 and CLDN9. As to expression, detected in epidermis and liver (at protein level). Widely expressed, with highest levels in liver and kidney.

The protein resides in the cell junction. The protein localises to the tight junction. Its subcellular location is the cell membrane. It localises to the basolateral cell membrane. Claudins function as major constituents of the tight junction complexes that regulate the permeability of epithelia. While some claudin family members play essential roles in the formation of impermeable barriers, others mediate the permeability to ions and small molecules. Often, several claudin family members are coexpressed and interact with each other, and this determines the overall permeability. CLDN1 is required to prevent the paracellular diffusion of small molecules through tight junctions in the epidermis and is required for the normal barrier function of the skin. Required for normal water homeostasis and to prevent excessive water loss through the skin, probably via an indirect effect on the expression levels of other proteins, since CLDN1 itself seems to be dispensable for water barrier formation in keratinocyte tight junctions. This chain is Claudin-1 (Cldn1), found in Mus musculus (Mouse).